A 522-amino-acid chain; its full sequence is Ankyrin repeat and death domain-containing protein 1A (522 aa).

11 ANK repeats span residues 14-43 (PLER…NTRA), 47-76 (VGRV…AVDE), 90-119 (FGMN…KIHC), 123-152 (DGLT…DVAL), 158-187 (LGRT…DHNV), 191-220 (EGNT…DLEE), 224-253 (EGLT…TVNA), 257-286 (KNLS…CANV), 290-319 (QGAS…DVNA), 323-352 (RQQT…DLNL), and 356-385 (QGKT…FYRW). The region spanning 413–501 (SVLWRLASRY…DLAGWSTMAR (89 aa)) is the Death domain.

In Homo sapiens (Human), this protein is Ankyrin repeat and death domain-containing protein 1A (ANKDD1A).